The following is a 702-amino-acid chain: Rho GTPase-activating protein 22 (702 aa).

Residues 43–151 form the PH domain; sequence PVLKAGWLRK…WVQAIRRVIW (109 aa). Residues 161 to 355 form the Rho-GAP domain; the sequence is QRLEDTVHHE…VLIRKHGQLF (195 aa). 4 disordered regions span residues 360–433, 438–457, 480–511, and 555–596; these read LEEP…HTLP, SFRQ…SSLE, RASS…FSST, and PSPL…TQAH. A phosphoserine mark is found at Ser-365 and Ser-397. Polar residues-rich tracts occupy residues 407-421, 438-456, 491-504, and 581-594; these read SRTS…TGPA, SFRQ…NSSL, GSAQ…NVPP, and SGSS…SPTQ. Residues 594 to 691 are a coiled coil; sequence QAHVRRCRAL…EEFFSTLGSL (98 aa).

Interacts with VEZF1. As to expression, predominantly present in endothelial cells (at protein level).

The protein localises to the cytoplasm. It localises to the nucleus. Rho GTPase-activating protein involved in the signal transduction pathway that regulates endothelial cell capillary tube formation during angiogenesis. Acts as a GTPase activator for the RAC1 by converting it to an inactive GDP-bound state. Inhibits RAC1-dependent lamellipodia formation. May also play a role in transcription regulation via its interaction with VEZF1, by regulating activity of the endothelin-1 (EDN1) promoter. The protein is Rho GTPase-activating protein 22 (Arhgap22) of Mus musculus (Mouse).